Here is a 352-residue protein sequence, read N- to C-terminus: Photosystem II D2 protein (352 aa).

The helical transmembrane segment at 40-60 (CAYLALGGWLTGTTFVTSWYT) threads the bilayer. His-117 is a binding site for chlorophyll a. A helical membrane pass occupies residues 124 to 140 (GFMLRQFEIARLVGVRP). Gln-129 and Asn-142 together coordinate pheophytin a. Residues 152–165 (VFVSVFLIYPLGQS) traverse the membrane as a helical segment. His-197 contacts chlorophyll a. Residues 207–227 (GALLCAIHGATVENTLFQDGE) form a helical membrane-spanning segment. Positions 214 and 261 each coordinate a plastoquinone. His-214 serves as a coordination point for Fe cation. His-268 contributes to the Fe cation binding site. Residues 278-294 (GLWMSSIGVVGLALNLR) form a helical membrane-spanning segment.

The protein belongs to the reaction center PufL/M/PsbA/D family. PSII is composed of 1 copy each of membrane proteins PsbA, PsbB, PsbC, PsbD, PsbE, PsbF, PsbH, PsbI, PsbJ, PsbK, PsbL, PsbM, PsbT, PsbX, PsbY, PsbZ, Psb30/Ycf12, peripheral proteins PsbO, CyanoQ (PsbQ), PsbU, PsbV and a large number of cofactors. It forms dimeric complexes. The D1/D2 heterodimer binds P680, chlorophylls that are the primary electron donor of PSII, and subsequent electron acceptors. It shares a non-heme iron and each subunit binds pheophytin, quinone, additional chlorophylls, carotenoids and lipids. There is also a Cl(-1) ion associated with D1 and D2, which is required for oxygen evolution. The PSII complex binds additional chlorophylls, carotenoids and specific lipids. is required as a cofactor.

It localises to the cellular thylakoid membrane. The enzyme catalyses 2 a plastoquinone + 4 hnu + 2 H2O = 2 a plastoquinol + O2. Its function is as follows. Photosystem II (PSII) is a light-driven water:plastoquinone oxidoreductase that uses light energy to abstract electrons from H(2)O, generating O(2) and a proton gradient subsequently used for ATP formation. It consists of a core antenna complex that captures photons, and an electron transfer chain that converts photonic excitation into a charge separation. The D1/D2 (PsbA/PsbD) reaction center heterodimer binds P680, the primary electron donor of PSII as well as several subsequent electron acceptors. D2 is needed for assembly of a stable PSII complex. The protein is Photosystem II D2 protein of Synechococcus sp. (strain JA-2-3B'a(2-13)) (Cyanobacteria bacterium Yellowstone B-Prime).